Reading from the N-terminus, the 300-residue chain is Mitochondrial tricarboxylate transporter 1 (300 aa).

Solcar repeat units follow at residues 8 to 98 (VSPS…FRSM), 107 to 197 (LSNS…LRDW), and 209 to 294 (INWL…VVWL). The next 6 helical transmembrane spans lie at 11 to 31 (SVSV…TFPI), 67 to 87 (PKGL…KAGV), 114 to 134 (LAGM…SETI), 172 to 191 (GVVP…LGTY), 208 to 228 (LINW…AVYG), and 277 to 297 (LIVS…LLAG).

Belongs to the mitochondrial carrier (TC 2.A.29) family.

It localises to the mitochondrion membrane. In terms of biological role, mitochondrial tricarboxylate transporter; part of the gene cluster that mediates the biosynthesis of itaconic acid and 2-hydroxyparaconate. Cis-aconitate is secreted by the mitochondrial tricarboxylate transporter MTT1. In the cytosol cis-aconitate is converted into trans-aconitate via isomerization by the aconitate-delta-isomerase ADI1. Decarboxylation of trans-aconitate by the trans-aconitate decarboxylase TAD1 then leads then to the production of itaconic acid. The cytochrome P450 monooxygenase CYP3 further converts itaconate to 2-hydroxyparaconate via oxidation of the double bond, leading to a transient epoxide, which can subsequently be lactonized to produce 2-hydroxyparaconate. Secretion of itaconate and possibly 2-hydroxyparaconate into the medium is mediated by the major facilitator ITP1. The glyoxalase domain-containing protein RDO1 is not involved in the biosynthesis of itaconate and 2-hydroxyparaconate, however, it might play a role in the further conversion of 2-hydroxyparaconate to itatartarate. The protein is Mitochondrial tricarboxylate transporter 1 of Mycosarcoma maydis (Corn smut fungus).